Consider the following 337-residue polypeptide: Mitochondrial amidoxime-reducing component 1 (337 aa).

The N-myristoyl glycine moiety is linked to residue glycine 2. Over 2–20 (GAAGSSALARFVLLAQSRP) the chain is Mitochondrial matrix. Residues 21–40 (GWLGVAALGLTAVALGAVAW) traverse the membrane as a helical; Signal-anchor for type II membrane protein segment. At 41-337 (RRAWPTRRRR…VGDPVYLLGQ (297 aa)) the chain is on the cytoplasmic side. Residues lysine 67, serine 68, and arginine 92 each coordinate Mo-molybdopterin. Positions 93–183 (FWLVINQEGN…KSQPYRLVHF (91 aa)) are MOSC N-terminal region. In terms of domain architecture, MOSC spans 187 to 335 (MRPRRPHQIA…IKVGDPVYLL (149 aa)). Mo-molybdopterin contacts are provided by threonine 210, serine 211, arginine 238, asparagine 240, serine 271, arginine 272, cysteine 273, and tyrosine 317.

Component of a complex composed of cytochrome b5, NADH-cytochrome b5 reductase and MTARC1. Mo-molybdopterin is required as a cofactor.

The protein resides in the mitochondrion outer membrane. Its subcellular location is the membrane. The catalysed reaction is N(omega)-hydroxy-L-arginine + 2 Fe(II)-[cytochrome b5] + 2 H(+) = L-arginine + 2 Fe(III)-[cytochrome b5] + H2O. Its function is as follows. Catalyzes the reduction of N-oxygenated molecules, acting as a counterpart of cytochrome P450 and flavin-containing monooxygenases in metabolic cycles. As a component of prodrug-converting system, reduces a multitude of N-hydroxylated prodrugs particularly amidoximes, leading to increased drug bioavailability. May be involved in mitochondrial N(omega)-hydroxy-L-arginine (NOHA) reduction, regulating endogenous nitric oxide levels and biosynthesis. Postulated to cleave the N-OH bond of N-hydroxylated substrates in concert with electron transfer from NADH to cytochrome b5 reductase then to cytochrome b5, the ultimate electron donor that primes the active site for substrate reduction. This Homo sapiens (Human) protein is Mitochondrial amidoxime-reducing component 1.